A 165-amino-acid chain; its full sequence is Ribosome maturation factor RimM (165 aa).

The 72-residue stretch at 92–163 (EARHYWADLE…RVVVDPPEGL (72 aa)) folds into the PRC barrel domain.

This sequence belongs to the RimM family. In terms of assembly, binds ribosomal protein uS19.

The protein localises to the cytoplasm. Its function is as follows. An accessory protein needed during the final step in the assembly of 30S ribosomal subunit, possibly for assembly of the head region. Essential for efficient processing of 16S rRNA. May be needed both before and after RbfA during the maturation of 16S rRNA. It has affinity for free ribosomal 30S subunits but not for 70S ribosomes. The polypeptide is Ribosome maturation factor RimM (Anaeromyxobacter sp. (strain Fw109-5)).